A 470-amino-acid polypeptide reads, in one-letter code: MDQPHALLVASPGLGHLIPILELGNRLSSVLNIHVTILAVTSGSSSPTETEAIHAAAARTICQITEIPSVDVDNLVEPDATIFTKMVVKMRAMKPAVRDAVKLMKRKPTVMIVDFLGTELMSVADDVGMTAKYVYVPTHAWFLAVMVYLPVLDTVVEGEYVDIKEPLKIPGCKPVGPKELMETMLDRSGQQYKECVRAGLEVPMSDGVLVNTWEELQGNTLAALREDEELSRVMKVPVYPIGPIVRTNQHVDKPNSIFEWLDEQRERSVVFVCLGSGGTLTFEQTVELALGLELSGQRFVWVLRRPASYLGAISSDDEQVSASLPEGFLDRTRGVGIVVTQWAPQVEILSHRSIGGFLSHCGWSSALESLTKGVPIIAWPLYAEQWMNATLLTEEIGVAVRTSELPSERVIGREEVASLVRKIMAEEDEEGQKIRAKAEEVRVSSERAWSKDGSSYNSLFEWAKRCYLVP.

Residues S276, 343-345, 360-368, and 382-385 each bind UDP-alpha-D-glucose; these read APQ, HCGWSSALE, and YAEQ.

It belongs to the UDP-glycosyltransferase family.

The chain is UDP-glycosyltransferase 72D1 (UGT72D1) from Arabidopsis thaliana (Mouse-ear cress).